The following is a 417-amino-acid chain: Chaperone SurA (417 aa).

The first 12 residues, 1–12 (MGAALLCSFAHA), serve as a signal peptide directing secretion. 2 consecutive PpiC domains span residues 163-264 (SEEY…KLEE) and 273-372 (RDEV…QVLG).

It localises to the periplasm. It catalyses the reaction [protein]-peptidylproline (omega=180) = [protein]-peptidylproline (omega=0). In terms of biological role, chaperone involved in the correct folding and assembly of outer membrane proteins. Recognizes specific patterns of aromatic residues and the orientation of their side chains, which are found more frequently in integral outer membrane proteins. May act in both early periplasmic and late outer membrane-associated steps of protein maturation. The polypeptide is Chaperone SurA (Pseudomonas aeruginosa (strain ATCC 15692 / DSM 22644 / CIP 104116 / JCM 14847 / LMG 12228 / 1C / PRS 101 / PAO1)).